The chain runs to 283 residues: NFU1 iron-sulfur cluster scaffold homolog, mitochondrial (283 aa).

A mitochondrion-targeting transit peptide spans 1-30; sequence MSKFLSQAALNTLRNTRLGSRQLVRSFAGI. Residues 182–250 form a nifU region; it reads IKELLDTRIR…IPEVESVEQV (69 aa). The [4Fe-4S] cluster site is built by Cys219 and Cys222.

It belongs to the NifU family.

The protein resides in the mitochondrion. Functionally, molecular scaffold for [Fe-S] cluster assembly of mitochondrial iron-sulfur proteins. The polypeptide is NFU1 iron-sulfur cluster scaffold homolog, mitochondrial (Drosophila yakuba (Fruit fly)).